The primary structure comprises 334 residues: Heat-inducible transcription repressor HrcA (334 aa).

This sequence belongs to the HrcA family.

Its function is as follows. Negative regulator of class I heat shock genes (grpE-dnaK-dnaJ and groELS operons). Prevents heat-shock induction of these operons. The protein is Heat-inducible transcription repressor HrcA of Albidiferax ferrireducens (strain ATCC BAA-621 / DSM 15236 / T118) (Rhodoferax ferrireducens).